The primary structure comprises 568 residues: Proline--tRNA ligase (568 aa).

Belongs to the class-II aminoacyl-tRNA synthetase family. ProS type 1 subfamily. Homodimer.

It is found in the cytoplasm. It catalyses the reaction tRNA(Pro) + L-proline + ATP = L-prolyl-tRNA(Pro) + AMP + diphosphate. Functionally, catalyzes the attachment of proline to tRNA(Pro) in a two-step reaction: proline is first activated by ATP to form Pro-AMP and then transferred to the acceptor end of tRNA(Pro). As ProRS can inadvertently accommodate and process non-cognate amino acids such as alanine and cysteine, to avoid such errors it has two additional distinct editing activities against alanine. One activity is designated as 'pretransfer' editing and involves the tRNA(Pro)-independent hydrolysis of activated Ala-AMP. The other activity is designated 'posttransfer' editing and involves deacylation of mischarged Ala-tRNA(Pro). The misacylated Cys-tRNA(Pro) is not edited by ProRS. This Listeria monocytogenes serovar 1/2a (strain ATCC BAA-679 / EGD-e) protein is Proline--tRNA ligase.